Consider the following 308-residue polypeptide: Glutaminase (308 aa).

Substrate is bound by residues S68, N118, E162, N169, Y193, Y244, and V262.

The protein belongs to the glutaminase family. In terms of assembly, homotetramer.

The enzyme catalyses L-glutamine + H2O = L-glutamate + NH4(+). This is Glutaminase from Hahella chejuensis (strain KCTC 2396).